The following is a 123-amino-acid chain: Transmembrane protein 254 (123 aa).

Position 2 is an N-acetylalanine (alanine 2). 3 helical membrane passes run 15 to 35 (LFWF…VFWP), 61 to 81 (LCNG…YAIV), and 95 to 115 (LLWF…LIAY).

It localises to the membrane. The sequence is that of Transmembrane protein 254 (TMEM254) from Pongo abelii (Sumatran orangutan).